The chain runs to 231 residues: 7-cyano-7-deazaguanine synthase (231 aa).

Residue 11–21 (LSGGLDSATTM) coordinates ATP. Residues C195, C205, C208, and C211 each coordinate Zn(2+).

It belongs to the QueC family. Requires Zn(2+) as cofactor.

The enzyme catalyses 7-carboxy-7-deazaguanine + NH4(+) + ATP = 7-cyano-7-deazaguanine + ADP + phosphate + H2O + H(+). It participates in purine metabolism; 7-cyano-7-deazaguanine biosynthesis. In terms of biological role, catalyzes the ATP-dependent conversion of 7-carboxy-7-deazaguanine (CDG) to 7-cyano-7-deazaguanine (preQ(0)). In Syntrophus aciditrophicus (strain SB), this protein is 7-cyano-7-deazaguanine synthase.